We begin with the raw amino-acid sequence, 235 residues long: Protein Thf1 (235 aa).

The stretch at aspartate 183–valine 204 forms a coiled coil. The disordered stretch occupies residues aspartate 213 to glutamate 235. Residues glutamine 222–glutamate 235 show a composition bias toward polar residues.

Belongs to the THF1 family.

In terms of biological role, may be involved in photosynthetic membrane biogenesis. The sequence is that of Protein Thf1 from Nostoc punctiforme (strain ATCC 29133 / PCC 73102).